The chain runs to 114 residues: MTFQSKKFPSTANTNTFAAKYRAMMKKHPFLLFGLPFMSVIVAGSFILTPAAAIRYEKYDRKVRQVSREEELGLGQRKRRVDIREEYYRLAAKDLDNWEQKRVERLKGESDGLL.

The chain crosses the membrane as a helical span at residues 29-49 (PFLLFGLPFMSVIVAGSFILT).

It belongs to the COX16 family.

It is found in the mitochondrion inner membrane. Required for the assembly of the mitochondrial respiratory chain complex IV (CIV), also known as cytochrome c oxidase. May participate in merging the COX1 and COX2 assembly lines. This Neurospora crassa (strain ATCC 24698 / 74-OR23-1A / CBS 708.71 / DSM 1257 / FGSC 987) protein is Cytochrome c oxidase assembly protein cox16, mitochondrial (cox-9).